Here is a 298-residue protein sequence, read N- to C-terminus: Short-chain dehydrogenase/reductase prx6 (298 aa).

Positions 27, 70, 97, 174, 178, 208, and 210 each coordinate NADP(+). Tyr-174 functions as the Proton acceptor in the catalytic mechanism. Residue Lys-178 is the Lowers pKa of active site Tyr of the active site.

This sequence belongs to the short-chain dehydrogenases/reductases (SDR) family.

It functions in the pathway sesquiterpene biosynthesis. In terms of biological role, short-chain dehydrogenase/reductase; part of the gene cluster that mediates the biosynthesis of PR-toxin, a bicyclic sesquiterpene belonging to the eremophilane class and acting as a mycotoxin. The first step of the pathway is catalyzed by the aristolochene synthase which performs the cyclization of trans,trans-farnesyl diphosphate (FPP) to the bicyclic sesquiterpene aristolochene. Following the formation of aristolochene, the non-oxygenated aristolochene is converted to the trioxygenated intermediate eremofortin B, via 7-epi-neopetasone. This conversion appears to involve three enzymes, a hydroxysterol oxidase-like enzyme, the quinone-oxidase prx3 that forms the quinone-type-structure in the bicyclic nucleus of aristolochene with the C8-oxo group and the C-3 hydroxyl group, and the P450 monooxygenase prx9 that introduces the epoxide at the double bond between carbons 1 and 2. No monoxy or dioxy-intermediates have been reported to be released to the broth, so these three early oxidative reactions may be coupled together. Eremofortin B is further oxidized by another P450 monooxygenase, that introduces a second epoxide between carbons 7 and 11 prior to acetylation to eremofortin A by the acetyltransferase prx11. The second epoxidation may be performed by a second P450 monooxygenase. After the acetylation step, eremofortin A is converted to eremofortin C and then to PR-toxin. First the conversion of eremofortin A to eremofortin C proceeds by oxidation of the side chain of the molecule at C-12 and is catalyzed by the short-chain oxidoreductase prx1. The cytochrome P450 monooxygenase prx8 also plays a role in this step. The primary alcohol formed at C-12 is finally oxidized by the short-chain alcohol dehydrogenase prx4 that forms PR-toxin. This Penicillium rubens (strain ATCC 28089 / DSM 1075 / NRRL 1951 / Wisconsin 54-1255) (Penicillium chrysogenum) protein is Short-chain dehydrogenase/reductase prx6.